Consider the following 505-residue polypeptide: uncharacterized protein (505 aa).

Catalysis depends on His-431, which acts as the Proton acceptor.

It belongs to the GMC oxidoreductase family. Requires FAD as cofactor.

This is an uncharacterized protein from Sinorhizobium fredii (strain NBRC 101917 / NGR234).